We begin with the raw amino-acid sequence, 59 residues long: Large ribosomal subunit protein bL33 (59 aa).

This sequence belongs to the bacterial ribosomal protein bL33 family.

The polypeptide is Large ribosomal subunit protein bL33 (Prosthecochloris aestuarii (strain DSM 271 / SK 413)).